Consider the following 195-residue polypeptide: Dihydroneopterin triphosphate diphosphatase (195 aa).

D73 functions as the Proton acceptor in the catalytic mechanism.

This sequence belongs to the HAM1 NTPase family. Requires Mn(2+) as cofactor.

The enzyme catalyses 7,8-dihydroneopterin 3'-triphosphate + H2O = 7,8-dihydroneopterin 3'-phosphate + diphosphate + H(+). Its pathway is cofactor biosynthesis; tetrahydrofolate biosynthesis. In terms of biological role, pyrophosphatase involved in the biosynthesis of tetrahydrofolate. Catalyzes the hydrolysis of dihydroneopterin triphosphate (DHNTP) to dihydroneopterin monophosphate (DHNMP) and pyrophosphate. Shows a strict substrate specificity. Has only weak activity with GTP, ITP, XTP and dTTP, and cannot use ATP, UTP, CTP, NAD(+), NADH, diadenosine triphosphate, diadenosine tetraphosphate, ADP-ribose and UDP-glucose. The sequence is that of Dihydroneopterin triphosphate diphosphatase from Limosilactobacillus reuteri (strain DSM 20016) (Lactobacillus reuteri).